The sequence spans 558 residues: uncharacterized protein (558 aa).

The next 12 helical transmembrane spans lie at 21–41, 69–89, 100–120, 160–180, 220–240, 251–271, 303–323, 386–406, 413–433, 454–474, 479–499, and 519–539; these read IFCFYIYCILFGSLLLFLPIA, FLDALFLSTSAFSDTGLSTVV, IVLAVLLQLGGIGFVVIAFLA, IIFLFIVELIYGFLYGILFYF, AFQAGFFHSLSAVNNAGIDLI, GLGIIIQWLTISQIIFGGIGY, VITNIVVILLFFTLLLMVEFI, VFPVASEIQTTKIIIALAMFI, TAGGIRTTTLAVIFLALVAKF, AFLVLIISLIAVLLTAVLLPL, PVSFIDALFETTSAFGTVGLS, and ALCLLMVMGQVGVSSSVLTFV.

It belongs to the TrkH potassium transport family.

The protein localises to the cell membrane. This is an uncharacterized protein from Mycoplasma genitalium (strain ATCC 33530 / DSM 19775 / NCTC 10195 / G37) (Mycoplasmoides genitalium).